The primary structure comprises 193 residues: N-(5'-phosphoribosyl)anthranilate isomerase (193 aa).

The protein belongs to the TrpF family.

The enzyme catalyses N-(5-phospho-beta-D-ribosyl)anthranilate = 1-(2-carboxyphenylamino)-1-deoxy-D-ribulose 5-phosphate. The protein operates within amino-acid biosynthesis; L-tryptophan biosynthesis; L-tryptophan from chorismate: step 3/5. The chain is N-(5'-phosphoribosyl)anthranilate isomerase from Streptococcus mutans serotype c (strain ATCC 700610 / UA159).